Here is a 198-residue protein sequence, read N- to C-terminus: Large ribosomal subunit protein bL9 (198 aa).

It belongs to the bacterial ribosomal protein bL9 family.

Binds to the 23S rRNA. This is Large ribosomal subunit protein bL9 from Bartonella tribocorum (strain CIP 105476 / IBS 506).